Reading from the N-terminus, the 501-residue chain is Cytokinin dehydrogenase 2 (501 aa).

The first 22 residues, 1-22 (MANLRLMITLITVLMITKSSNG), serve as a signal peptide directing secretion. Residues Asn32 and Asn51 are each glycosylated (N-linked (GlcNAc...) asparagine). One can recognise an FAD-binding PCMH-type domain in the interval 53–226 (TTVTPGGVIC…TRARIVLDHA (174 aa)). Ala87, Gly89, and Gly91 together coordinate FAD. His92 is modified (pros-8alpha-FAD histidine). Ser93 and Gln97 together coordinate FAD. Asn107 carries an N-linked (GlcNAc...) asparagine glycan. 8 residues coordinate FAD: Asp150, Thr155, Ser161, Ile165, Ile216, Tyr460, Ser495, and Gln498.

This sequence belongs to the oxygen-dependent FAD-linked oxidoreductase family. Requires FAD as cofactor. As to expression, expressed in the shoot apex, in stipules, and occasionally in the most apical part of the inflorescence stems. Not detected in roots.

The protein localises to the endoplasmic reticulum. It localises to the secreted. Its subcellular location is the extracellular space. The enzyme catalyses N(6)-dimethylallyladenine + A + H2O = 3-methyl-2-butenal + adenine + AH2. Catalyzes the oxidation of cytokinins, a family of N(6)-substituted adenine derivatives that are plant hormones, where the substituent is an isopentenyl group. Modulates asymmetric cytokinin signaling in emerged lateral roots. Its activity determines cell elongation and number in emerged lateral roots and defines angular growth of lateral roots. This is Cytokinin dehydrogenase 2 (CKX2) from Arabidopsis thaliana (Mouse-ear cress).